The following is a 124-amino-acid chain: Small ribosomal subunit protein uS12 (124 aa).

Residues 1–25 (MARINQLVRKPRRARAKKSDVPALE) are disordered. Position 89 is a 3-methylthioaspartic acid (D89). Positions 103-124 (DTAGVSGRRRGRSKYGEKKPKE) are disordered.

It belongs to the universal ribosomal protein uS12 family. Part of the 30S ribosomal subunit. Contacts proteins S8 and S17. May interact with IF1 in the 30S initiation complex.

With S4 and S5 plays an important role in translational accuracy. Its function is as follows. Interacts with and stabilizes bases of the 16S rRNA that are involved in tRNA selection in the A site and with the mRNA backbone. Located at the interface of the 30S and 50S subunits, it traverses the body of the 30S subunit contacting proteins on the other side and probably holding the rRNA structure together. The combined cluster of proteins S8, S12 and S17 appears to hold together the shoulder and platform of the 30S subunit. The sequence is that of Small ribosomal subunit protein uS12 from Coxiella burnetii (strain Dugway 5J108-111).